The primary structure comprises 289 residues: MQIPRSVGTHDGSFHADEVTACALLIMFDLVDKDKIIRTRDSEKLAQCEYVCDVGGRYSIADKRFDHHQVSYTGSWSSAGMVLDYLHHLGSLPHEEYEYLNSTLVHGVDEQDNGRFFSKEGFCSFSDIIKIYNPLEEGGNTDKEFFFALHFAIDLLTRLREKFRYDRICRDVVKQVMEKEDVCLRFDRPLAWQENFFSLGGENHPAAFVSFPCSDQWILRGIPPTLDRRMEVRIPFPEDWAGLLGDQLVKATGIPGAIFCHKGLFLSVWDSRESCEEALNLVLKQQGVV.

This sequence belongs to the MYG1 family.

This is MYG1 protein TC_0665 from Chlamydia muridarum (strain MoPn / Nigg).